The chain runs to 317 residues: 1D-myo-inositol 2-acetamido-2-deoxy-alpha-D-glucopyranoside deacetylase (317 aa).

Zn(2+) contacts are provided by His15, Asp18, and His154. The disordered stretch occupies residues 289–317; it reads QDLDNRNPNSQPPADQAREDHLLTGLGFA.

This sequence belongs to the MshB deacetylase family. Zn(2+) serves as cofactor.

It carries out the reaction 1D-myo-inositol 2-acetamido-2-deoxy-alpha-D-glucopyranoside + H2O = 1D-myo-inositol 2-amino-2-deoxy-alpha-D-glucopyranoside + acetate. In terms of biological role, catalyzes the deacetylation of 1D-myo-inositol 2-acetamido-2-deoxy-alpha-D-glucopyranoside (GlcNAc-Ins) in the mycothiol biosynthesis pathway. The chain is 1D-myo-inositol 2-acetamido-2-deoxy-alpha-D-glucopyranoside deacetylase from Segniliparus rotundus (strain ATCC BAA-972 / CDC 1076 / CIP 108378 / DSM 44985 / JCM 13578).